Consider the following 915-residue polypeptide: p53-induced death domain-containing protein 1 (915 aa).

A2 is subject to N-acetylalanine. 7 LRR repeats span residues C131–L152, G154–P176, A177–S199, T200–L221, S223–R245, S246–P268, and L269–A290. A Phosphoserine modification is found at S304. ZU5 domains follow at residues D327–P459 and V460–T601. Peptidase S68 regions lie at residues D428 to L457 and D571 to Y599. Residues H449, S451, H591, and S593 contribute to the active site. The segment at A585–D721 is UPA domain. The Death domain occupies T793–L878. The disordered stretch occupies residues S888–A915. Polar residues predominate over residues L901–A915.

In terms of assembly, forms a complex named the PIDDosome with CASP2 and CRADD. Forms a complex with IKBKG and RIPK1. Interacts with FADD and MADD. Undergoes autoproteolytic processing whose extent either directs cells towards survival or apoptotic pathways. Autoproteolytically cleaved into two main fragments PIDD-N and PIDD-C. PIDD-C can be further processed into PIDD-CC, a processing which is enhanced by DNA damage. The cleavage producing PIDD-C is required for translocation of PIDD1 to the nucleus upon DNA damage and activation of NF-kappa-B. PIDD-CC mediates the interaction with CRADD and the cleavage producing PIDD-CC is required for the activation of CASP2. PIDD-N remains associated with PIDD-C and PIDD-CC after cleavage. In terms of tissue distribution, ubiquitous.

It is found in the cytoplasm. The protein localises to the nucleus. Functionally, component of the DNA damage/stress response pathway that functions downstream of p53/TP53 and can either promote cell survival or apoptosis. Associated with CRADD and the CASP2 caspase, it forms the PIDDosome a complex that activates CASP2 and triggers apoptosis. Associated with IKBKG and RIPK1, it enhances sumoylation and ubiquitination of IKBKG which is important for activation of the transcription factor NF-kappa-B. The protein is p53-induced death domain-containing protein 1 of Mus musculus (Mouse).